A 222-amino-acid polypeptide reads, in one-letter code: Triosephosphate isomerase (222 aa).

9–11 (NYK) contributes to the substrate binding site. H93 serves as the catalytic Electrophile. The active-site Proton acceptor is the E141. Substrate contacts are provided by residues I146, G181, and 202–203 (AS).

It belongs to the triosephosphate isomerase family. In terms of assembly, homotetramer; dimer of dimers.

It localises to the cytoplasm. The enzyme catalyses D-glyceraldehyde 3-phosphate = dihydroxyacetone phosphate. Its pathway is carbohydrate biosynthesis; gluconeogenesis. It participates in carbohydrate degradation; glycolysis; D-glyceraldehyde 3-phosphate from glycerone phosphate: step 1/1. Its function is as follows. Involved in the gluconeogenesis. Catalyzes stereospecifically the conversion of dihydroxyacetone phosphate (DHAP) to D-glyceraldehyde-3-phosphate (G3P). In Methanosarcina acetivorans (strain ATCC 35395 / DSM 2834 / JCM 12185 / C2A), this protein is Triosephosphate isomerase.